A 432-amino-acid polypeptide reads, in one-letter code: Peptidyl-prolyl cis-trans isomerase cyp6 (432 aa).

Positions 1 to 168 (MSVLIETTVG…RDIRIKHTII (168 aa)) constitute a PPIase cyclophilin-type domain. Position 206 is a phosphoserine (serine 206). Residues 244–322 (NVLFVCKLNP…SRIHVDFSQS (79 aa)) enclose the RRM domain. The disordered stretch occupies residues 330-432 (YNSNRDRKRS…DRRYRDDRYR (103 aa)). Composition is skewed to basic and acidic residues over residues 341–366 (SRSDDREYHRRSDGRYDRSNYRDDYR), 373–395 (DHRDDQSSFRNERFSNYYGDDRS), and 406–432 (NCDDHLRDKSPERRYRYDRRYRDDRYR).

The protein belongs to the cyclophilin-type PPIase family. PPIL4 subfamily.

The protein localises to the nucleus. It catalyses the reaction [protein]-peptidylproline (omega=180) = [protein]-peptidylproline (omega=0). In terms of biological role, PPIases accelerate the folding of proteins. It catalyzes the cis-trans isomerization of proline imidic peptide bonds in oligopeptides. The protein is Peptidyl-prolyl cis-trans isomerase cyp6 (cyp6) of Schizosaccharomyces pombe (strain 972 / ATCC 24843) (Fission yeast).